The chain runs to 445 residues: Exodeoxyribonuclease 7 large subunit (445 aa).

Belongs to the XseA family. Heterooligomer composed of large and small subunits.

The protein resides in the cytoplasm. The enzyme catalyses Exonucleolytic cleavage in either 5'- to 3'- or 3'- to 5'-direction to yield nucleoside 5'-phosphates.. In terms of biological role, bidirectionally degrades single-stranded DNA into large acid-insoluble oligonucleotides, which are then degraded further into small acid-soluble oligonucleotides. This is Exodeoxyribonuclease 7 large subunit from Staphylococcus aureus (strain USA300 / TCH1516).